The sequence spans 179 residues: MSRIGNRELKIPVGVEVTIQPNNVIVKSAKGQLEQAIPSVITVAAKEGVVTTTRANDVKHSKQLHGTINSLIQGMLEGVSKGFKKELEINGVGYRAALAGNKLTLSLGYSHPIEYKIPQGITITLPKPTQIIVEGISKKLVGEVAANIRNYRKPEPYKGKGIKYKNKHIIRKEGKSAGK.

The protein belongs to the universal ribosomal protein uL6 family. In terms of assembly, part of the 50S ribosomal subunit.

Functionally, this protein binds to the 23S rRNA, and is important in its secondary structure. It is located near the subunit interface in the base of the L7/L12 stalk, and near the tRNA binding site of the peptidyltransferase center. This is Large ribosomal subunit protein uL6 from Spiroplasma kunkelii.